A 233-amino-acid polypeptide reads, in one-letter code: Adenosine 5'-phosphosulfate reductase 1 (233 aa).

[4Fe-4S] cluster-binding residues include Cys120, Cys121, Cys203, and Cys206. Cys229 serves as the catalytic Nucleophile; cysteine thiosulfonate intermediate.

This sequence belongs to the PAPS reductase family. CysH subfamily. It depends on [4Fe-4S] cluster as a cofactor.

Its subcellular location is the cytoplasm. The enzyme catalyses [thioredoxin]-disulfide + sulfite + AMP + 2 H(+) = adenosine 5'-phosphosulfate + [thioredoxin]-dithiol. The protein operates within sulfur metabolism; hydrogen sulfide biosynthesis; sulfite from sulfate. Its function is as follows. Catalyzes the formation of sulfite from adenosine 5'-phosphosulfate (APS) using thioredoxin as an electron donor. The polypeptide is Adenosine 5'-phosphosulfate reductase 1 (cysH) (Bacillus subtilis (strain 168)).